The sequence spans 355 residues: Homeotic protein knotted-1 (355 aa).

Residues 205 to 233 (KCEGVGSSEEDQDNSGGETELPEIDPRAE) form a disordered region. The ELK domain maps to 236-256 (ELKNHLLRKYSGYLSSLKQEL). Residues 257 to 320 (SKKKKKGKLP…NQRKRHWKPS (64 aa)) constitute a DNA-binding region (homeobox; TALE-type).

This sequence belongs to the TALE/KNOX homeobox family. In terms of tissue distribution, expressed in the apical meristems, in the newly emerged lateral primordia in the floral bud, in their vascular bundles and in the cortex parenchyma of the floral pedicle. Also present in the lateral tips of leaf primordia.

It is found in the nucleus. In terms of biological role, appears to be involved in meristem formation and in the regulation of leaf morphology. Misexpression makes the leaf more compound which is always associated with growth retardation and loss of apical dominance, resulting in dwarfed, bushy plants. Probably binds to the DNA sequence 5'-TGAC-3'. This chain is Homeotic protein knotted-1 (KN1), found in Solanum lycopersicum (Tomato).